We begin with the raw amino-acid sequence, 182 residues long: Lipoprotein signal peptidase (182 aa).

Helical transmembrane passes span 21-41 (LLLS…VLAV), 74-94 (GYTW…FWMG), and 98-118 (VSPW…GNLV). Active-site residues include Asp134 and Asp148. A helical membrane pass occupies residues 146–166 (VADPSVVGGAILLVVLSIFGY).

It belongs to the peptidase A8 family.

The protein resides in the cell membrane. It carries out the reaction Release of signal peptides from bacterial membrane prolipoproteins. Hydrolyzes -Xaa-Yaa-Zaa-|-(S,diacylglyceryl)Cys-, in which Xaa is hydrophobic (preferably Leu), and Yaa (Ala or Ser) and Zaa (Gly or Ala) have small, neutral side chains.. Its pathway is protein modification; lipoprotein biosynthesis (signal peptide cleavage). Its function is as follows. This protein specifically catalyzes the removal of signal peptides from prolipoproteins. The polypeptide is Lipoprotein signal peptidase (Mycobacterium avium (strain 104)).